A 664-amino-acid polypeptide reads, in one-letter code: CRISPR-associated DNA-binding protein Cas12m (664 aa).

Residues 1 to 137 (MKRVTITIDG…AKYRELIGSD (137 aa)) are recognition domain (REC1-N). Residues 138-212 (EETAQMDTEI…AAKDRIRAAG (75 aa)) form a recognition domain (REC2) region. Residues 213 to 270 (NDIENLEKDRQAAVIKAYNNSGLWWGNYNAVLESYKKARIKALKDGAELKYHRFDGSG) form a recognition domain (REC1-C) region. The segment at 271–390 (RFTNQIQGGM…VWSVVFTFTT (120 aa)) is wedge domain (WED). The segment at 391-404 (DCPTYDQRSSTGNR) is linker. A ruvC-I region spans residues 405–618 (CGLNLGWKKQ…KNGTQIEQVS (214 aa)). The tract at residues 618 to 650 (STASSATCSACKGKMEQVDGIMWRCRECRALVD) is target nucleic-acid binding (TNB). Cysteine 625, cysteine 628, cysteine 642, and cysteine 645 together coordinate Zn(2+). The interval 651–664 (QDINAAANLFREVL) is ruvC-II. Aspartate 652 is a binding site for Mg(2+).

Belongs to the CRISPR-associated DNA-binding protein Cas12m family. Mg(2+) is required as a cofactor. It depends on Zn(2+) as a cofactor.

Its function is as follows. CRISPR (clustered regularly interspaced short palindromic repeat), is an adaptive immune system that provides protection against mobile genetic elements (viruses, transposable elements and conjugative plasmids). CRISPR clusters contain sequences complementary to antecedent mobile elements and target invading nucleic acids. CRISPR clusters are transcribed and processed into CRISPR RNA (crRNA). Recognizes a short motif in the CRISPR repeat sequences (the 5' PAM or protospacer adjacent motif, 5'-CCN-3' in this organism) to help distinguish self versus nonself, as targets within the bacterial CRISPR locus do not have PAMs. Cas12m-crRNA binds DNA in a PAM-dependent, crRNA-guided fashion. DNA-binding probably inhibits transcription, leading to gene silencing. Upon expression in E.coli as a CRISPR region preferentially binds to its associated crRNA. Probably required for pre-crRNA processing to mature crRNA. This Pelobacter propionicus (strain DSM 2379 / NBRC 103807 / OttBd1) protein is CRISPR-associated DNA-binding protein Cas12m.